The primary structure comprises 160 residues: Protein MGF 300-2R (160 aa).

It belongs to the asfivirus MGF 300 family.

Functionally, plays a role in virus cell tropism, and may be required for efficient virus replication in macrophages. This African swine fever virus (isolate Pig/Kenya/KEN-50/1950) (ASFV) protein is Protein MGF 300-2R.